The following is a 414-amino-acid chain: Arrestin domain-containing protein 3 (414 aa).

2 short sequence motifs (PPxY motif) span residues 346–349 (PPSY) and 391–394 (PPLY). Positions 393 to 414 (LYSEIDPNPDQSSEDRPSCPSR) are disordered. The segment covering 405-414 (SEDRPSCPSR) has biased composition (basic and acidic residues).

The protein belongs to the arrestin family. In terms of assembly, interacts (via PPxY motifs) with NEDD4 (via WW domains). Interacts with ADRB2. Interacts with ADRB3. Interacts with HGS (via PPxY motifs). Does not bind TXN (thioredoxin). Interacts with ITCH. In terms of tissue distribution, detected in visceral fat, subcutaneous fat, brown fat and skeletal muscle, and at lower levels in kidney.

It is found in the cytoplasm. The protein localises to the cell membrane. Its subcellular location is the lysosome. It localises to the endosome. The protein resides in the early endosome. In terms of biological role, adapter protein that plays a role in regulating cell-surface expression of adrenergic receptors and probably also other G protein-coupled receptors. Plays a role in NEDD4-mediated ubiquitination and endocytosis af activated ADRB2 and subsequent ADRB2 degradation. May recruit NEDD4 to ADRB2. Alternatively, may function as adapter protein that does not play a major role in recruiting NEDD4 to ADRB2, but rather plays a role in a targeting ADRB2 to endosomes. This is Arrestin domain-containing protein 3 (Arrdc3) from Mus musculus (Mouse).